A 336-amino-acid polypeptide reads, in one-letter code: tRNA N6-adenosine threonylcarbamoyltransferase (336 aa).

The Fe cation site is built by His-114 and His-118. Substrate contacts are provided by residues 136 to 140 (LVSGG), Asp-169, Gly-182, Asp-186, and Asn-275. Residue Asp-301 participates in Fe cation binding.

This sequence belongs to the KAE1 / TsaD family. Requires Fe(2+) as cofactor.

Its subcellular location is the cytoplasm. It catalyses the reaction L-threonylcarbamoyladenylate + adenosine(37) in tRNA = N(6)-L-threonylcarbamoyladenosine(37) in tRNA + AMP + H(+). In terms of biological role, required for the formation of a threonylcarbamoyl group on adenosine at position 37 (t(6)A37) in tRNAs that read codons beginning with adenine. Is involved in the transfer of the threonylcarbamoyl moiety of threonylcarbamoyl-AMP (TC-AMP) to the N6 group of A37, together with TsaE and TsaB. TsaD likely plays a direct catalytic role in this reaction. This is tRNA N6-adenosine threonylcarbamoyltransferase from Streptococcus pneumoniae (strain Hungary19A-6).